The chain runs to 453 residues: Trigger factor (453 aa).

Positions 171–256 (GDRVTISFKG…ASLIEAPQDI (86 aa)) constitute a PPIase FKBP-type domain.

It belongs to the FKBP-type PPIase family. Tig subfamily.

The protein resides in the cytoplasm. The catalysed reaction is [protein]-peptidylproline (omega=180) = [protein]-peptidylproline (omega=0). Functionally, involved in protein export. Acts as a chaperone by maintaining the newly synthesized protein in an open conformation. Functions as a peptidyl-prolyl cis-trans isomerase. The protein is Trigger factor of Nitrobacter hamburgensis (strain DSM 10229 / NCIMB 13809 / X14).